A 90-amino-acid polypeptide reads, in one-letter code: Barrier-to-autointegration factor A (90 aa).

Belongs to the BAF family. As to quaternary structure, homodimer. Interacts with nemp1a and nemp1b. In terms of processing, phosphorylated during S and M phases.

The protein localises to the nucleus. It localises to the chromosome. Its subcellular location is the nucleus envelope. The protein resides in the cytoplasm. Functionally, non-specific DNA-binding protein that plays key roles in mitotic nuclear reassembly, chromatin organization, DNA damage response, gene expression and intrinsic immunity against foreign DNA. Contains two non-specific double-stranded DNA (dsDNA)-binding sites which promote DNA cross-bridging. Plays a key role in nuclear membrane reformation at the end of mitosis by driving formation of a single nucleus in a spindle-independent manner. Transiently cross-bridges anaphase chromosomes via its ability to bridge distant DNA sites, leading to the formation of a dense chromatin network at the chromosome ensemble surface that limits membranes to the surface. Also acts as a negative regulator of innate immune activation by restricting CGAS activity toward self-DNA upon acute loss of nuclear membrane integrity. Outcompetes CGAS for DNA-binding, thereby preventing CGAS activation and subsequent damaging autoinflammatory responses. Also involved in DNA damage response; acts by inhibiting the ADP-ribosyltransferase activity of PARP1. Involved in the recognition of exogenous dsDNA in the cytosol: associates with exogenous dsDNA immediately after its appearance in the cytosol at endosome breakdown and is required to avoid autophagy. This Xenopus laevis (African clawed frog) protein is Barrier-to-autointegration factor A (banf1-a).